A 72-amino-acid polypeptide reads, in one-letter code: Antitoxin VapB11 (72 aa).

Antitoxin component of a type II toxin-antitoxin (TA) system. The chain is Antitoxin VapB11 (vapB11) from Mycobacterium tuberculosis (strain CDC 1551 / Oshkosh).